The sequence spans 304 residues: DCN1-like protein 3 (304 aa).

2 disordered regions span residues M1–S86 and E284–T304. Residue G2 is the site of N-myristoyl glycine attachment. One can recognise a DCUN1 domain in the interval S86 to M278.

Part of a complex containing DCUN1D3, CUL3 and RBX1. Interacts (via the DCUN1 domain) with the unneddylated cullins: interacts with CUL1, CUL2, CUL3, CUL4A, CUL4B and CUL5; these interactions promote the cullin neddylation and the identity of the cullin dictates the affinity of the interaction. Interacts preferentially with CUL3; this interaction triggers the relocalization of CUL3 to the cell membrane where CUL3 is neddylated. Interacts (via DCUN1 domain) with RBX1. May also interact with regulators or subunits of cullin-RING ligases such as RNF7, ELOB and DDB1; these interactions are bridged by cullins. Interacts (via DCUN1 domain) with CAND1; this interaction is bridged by cullins and strongly inhibits cullin neddylation. These CAND-cullin-DCNL complexes can only be neddylated in the presence of a substrate adapter. Interacts (via DCUN1 domain) with the N-terminally acetylated form of UBE2M and UBE2F. In terms of tissue distribution, tends to be down-regulated in different type of cancers, including lung neuroendocrine carcinoma, thyroid Huerthle cell carcinoma and lung squamous cell carcinoma. Mostly expressed in testis and brain. Highly expressed in liver, bladder and renal normal tissue than their tumor tissue counterparts. Palmitoylation stabilizes DCUN1D3 at the cell membrane.

The protein localises to the cell membrane. It localises to the cytoplasm. Its subcellular location is the nucleus. The protein resides in the perinuclear region. Functionally, contributes to the neddylation of all cullins by transferring NEDD8 from N-terminally acetylated NEDD8-conjugating E2s enzyme to different cullin C-terminal domain-RBX complexes and may play a role in the cell cycle progression by regulating the SCF ubiquitin E3 ligase complex, after UV damage. At the cell membrane, can promote and as well inhibit cullins neddylation. This is DCN1-like protein 3 from Homo sapiens (Human).